Consider the following 471-residue polypeptide: MAMSDLPNDLVEEIISRVPVKSIRAVSSTCKNWNTLSNDHSFTRKLFGKTITTKENECLVVMMMDSKVYLMSVNLHRIHKENDDNNIKSSIMHKAKLISLNDDDILNNTYIIFHCNGLLLLLGFTDDGIKLVVTNPHLGQTRWIKPRKANYQFCDKYAIGYEKKKNNSLRTNKMLLFHKESFCFRIYWFEIYNFNSASWNVFYFTRDWELPYSQGVSLKGNTYWFAREINIRGERIDDPPDFLICFDFTTERFGPRLHLPFHSHSDDTVILSSVREEQLAVLIKRFDLWRMEIWVTTKIEPKEVSWNKLFLAVDMIPLITAFQFCNVSFFIDEKKNVVVVLGKDVLNTRNIANIIGNDGYFKQVDLGESTNKYCYPLVCSYVPSSVQIKQATRVMHHHHIVLRAVVRAVRDSDRERKLNNGREHKISRRTRIHERILFRMLKLDEEAIGIRSRSVPRDRYQQGFASSPCRA.

One can recognise an F-box domain in the interval 1-46 (MAMSDLPNDLVEEIISRVPVKSIRAVSSTCKNWNTLSNDHSFTRKL).

The protein is Putative F-box protein At5g36200 of Arabidopsis thaliana (Mouse-ear cress).